We begin with the raw amino-acid sequence, 444 residues long: Tubulin beta-8 chain (444 aa).

Residues 1–4 (MREI) carry the MREI motif motif. Positions 11, 69, 138, 142, 143, and 144 each coordinate GTP. Residue Glu69 coordinates Mg(2+). Ser172 is subject to Phosphoserine; by CDK1. Asn204 and Asn226 together coordinate GTP. The segment at 423 to 444 (QQYQDATAEEEEDEEYAEEEVA) is disordered. Over residues 429–444 (TAEEEEDEEYAEEEVA) the composition is skewed to acidic residues. Glu436 carries the post-translational modification 5-glutamyl polyglutamate.

It belongs to the tubulin family. In terms of assembly, dimer of alpha and beta chains. A typical microtubule is a hollow water-filled tube with an outer diameter of 25 nm and an inner diameter of 15 nM. Alpha-beta heterodimers associate head-to-tail to form protofilaments running lengthwise along the microtubule wall with the beta-tubulin subunit facing the microtubule plus end conferring a structural polarity. Microtubules usually have 13 protofilaments but different protofilament numbers can be found in some organisms and specialized cells. Requires Mg(2+) as cofactor. Some glutamate residues at the C-terminus are polyglutamylated, resulting in polyglutamate chains on the gamma-carboxyl group. Polyglutamylation plays a key role in microtubule severing by spastin (SPAST). SPAST preferentially recognizes and acts on microtubules decorated with short polyglutamate tails: severing activity by SPAST increases as the number of glutamates per tubulin rises from one to eight, but decreases beyond this glutamylation threshold. Glutamylation is also involved in cilia motility. Post-translationally, some glutamate residues at the C-terminus are monoglycylated but not polyglycylated due to the absence of functional TTLL10 in human. Monoglycylation is mainly limited to tubulin incorporated into cilia and flagella axonemes, which is required for their stability and maintenance. Flagella glycylation controls sperm motility. Both polyglutamylation and monoglycylation can coexist on the same protein on adjacent residues, and lowering glycylation levels increases polyglutamylation, and reciprocally. In terms of processing, phosphorylated on Ser-172 by CDK1 during the cell cycle, from metaphase to telophase, but not in interphase. This phosphorylation inhibits tubulin incorporation into microtubules. In terms of tissue distribution, expressed at a high level in oocytes, at different stages of development.

The protein resides in the cytoplasm. The protein localises to the cytoskeleton. It is found in the spindle. Its function is as follows. Tubulin is the major constituent of microtubules, a cylinder consisting of laterally associated linear protofilaments composed of alpha- and beta-tubulin heterodimers. Microtubules grow by the addition of GTP-tubulin dimers to the microtubule end, where a stabilizing cap forms. Below the cap, tubulin dimers are in GDP-bound state, owing to GTPase activity of alpha-tubulin. TUBB8 has a key role in meiotic spindle assembly and oocyte maturation. The sequence is that of Tubulin beta-8 chain from Homo sapiens (Human).